The following is a 570-amino-acid chain: Phosphocholine hydrolase Lem3 (570 aa).

Its subcellular location is the secreted. The protein localises to the host cytoplasm. It carries out the reaction [Rab1 protein]-O-phosphocholine-L-serine + H2O = [Rab1 protein]-L-serine + phosphocholine + H(+). In terms of biological role, virulence effector that plays a role in hijacking the host vesicular trafficking by recruiting the small guanosine triphosphatase (GTPase) Rab1 to the cytosolic face of the Legionella-containing vacuole (LCVs). Acts as a phosphocholine hydrolase by mediating the hydrolysis of phosphocholine to Ser residues of host RAB1 (RAB1A, RAB1B or RAB1C). Dephosphocholination of target proteins restores accessibility to GTPase effector LepB. Can act on both GDP-bound and GTP-bound Rab proteins. This chain is Phosphocholine hydrolase Lem3 (lem3), found in Legionella pneumophila subsp. pneumophila (strain Philadelphia 1 / ATCC 33152 / DSM 7513).